Consider the following 110-residue polypeptide: uncharacterized protein (110 aa).

This is an uncharacterized protein from Microplitis demolitor bracovirus (isolate Webb) (MdBV).